Consider the following 116-residue polypeptide: Large ribosomal subunit protein bL17 (116 aa).

It belongs to the bacterial ribosomal protein bL17 family. As to quaternary structure, part of the 50S ribosomal subunit. Contacts protein L32.

The polypeptide is Large ribosomal subunit protein bL17 (Synechococcus sp. (strain RCC307)).